A 153-amino-acid chain; its full sequence is uncharacterized protein (153 aa).

A2 carries the post-translational modification N-acetylalanine.

This is an uncharacterized protein from Arabidopsis thaliana (Mouse-ear cress).